A 209-amino-acid polypeptide reads, in one-letter code: Ribosomal RNA large subunit methyltransferase E (209 aa).

Residues Gly63, Trp65, Asp83, Asp99, and Asp124 each coordinate S-adenosyl-L-methionine. Lys164 functions as the Proton acceptor in the catalytic mechanism.

This sequence belongs to the class I-like SAM-binding methyltransferase superfamily. RNA methyltransferase RlmE family.

The protein localises to the cytoplasm. It catalyses the reaction uridine(2552) in 23S rRNA + S-adenosyl-L-methionine = 2'-O-methyluridine(2552) in 23S rRNA + S-adenosyl-L-homocysteine + H(+). Specifically methylates the uridine in position 2552 of 23S rRNA at the 2'-O position of the ribose in the fully assembled 50S ribosomal subunit. This is Ribosomal RNA large subunit methyltransferase E from Shewanella piezotolerans (strain WP3 / JCM 13877).